The following is a 144-amino-acid chain: Large ribosomal subunit protein uL13 (144 aa).

This sequence belongs to the universal ribosomal protein uL13 family. In terms of assembly, part of the 50S ribosomal subunit.

Its function is as follows. This protein is one of the early assembly proteins of the 50S ribosomal subunit, although it is not seen to bind rRNA by itself. It is important during the early stages of 50S assembly. The chain is Large ribosomal subunit protein uL13 from Pelotomaculum thermopropionicum (strain DSM 13744 / JCM 10971 / SI).